Reading from the N-terminus, the 764-residue chain is MKVDIDTSDKLYADAWLGFKGTDWKNEINVRDFIQHNYTPYEGDESFLAEATPATTELWEKVMEGIRIENATHAPVDFDTNIATTITAHDAGYINQPLEKIVGLQTDAPLKRALHPFGGINMIKSSFHAYGREMDSEFEYLFTDLRKTHNQGVFDVYSPDMLRCRKSGVLTGLPDGYGRGRIIGDYRRVALYGISYLVRERELQFADLQSRLEKGEDLEATIRLREELAEHRHALLQIQEMAAKYGFDISRPAQNAQEAVQWLYFAYLAAVKSQNGGAMSLGRTASFLDIYIERDFKAGVLNEQQAQELIDHFIMKIRMVRFLRTPEFDSLFSGDPIWATEVIGGMGLDGRTLVTKNSFRYLHTLHTMGPAPEPNLTILWSEELPIAFKKYAAQVSIVTSSLQYENDDLMRTDFNSDDYAIACCVSPMVIGKQMQFFGARANLAKTLLYAINGGVDEKLKIQVGPKTAPLMDDVLDYDKVMDSLDHFMDWLAVQYISALNIIHYMHDKYSYEASLMALHDRDVYRTMACGIAGLSVATDSLSAIKYARVKPIRDENGLAVDFEIDGEYPQYGNNDERVDSIACDLVERFMKKIKALPTYRNAVPTQSILTITSNVVYGQKTGNTPDGRRAGTPFAPGANPMHGRDRKGAVASLTSVAKLPFTYAKDGISYTFSIVPAALGKEDPVRKTNLVGLLDGYFHHEADVEGGQHLNVNVMNREMLLDAIEHPEKYPNLTIRVSGYAVRFNALTREQQQDVISRTFTQAL.

Positions 7-629 (TSDKLYADAW…KTGNTPDGRR (623 aa)) constitute a PFL domain. The active-site S-acetylcysteine intermediate is Cys-423. Cys-424 (cysteine radical intermediate) is an active-site residue. A disordered region spans residues 622 to 645 (GNTPDGRRAGTPFAPGANPMHGRD). One can recognise a Glycine radical domain in the interval 636–764 (PGANPMHGRD…VISRTFTQAL (129 aa)). A Glycine radical modification is found at Gly-739.

Belongs to the glycyl radical enzyme (GRE) family. PFL subfamily.

The protein localises to the cytoplasm. The enzyme catalyses 2-oxobutanoate + CoA = propanoyl-CoA + formate. The catalysed reaction is formate + acetyl-CoA = pyruvate + CoA. Its pathway is amino-acid degradation; L-threonine degradation via propanoate pathway; propanoate from L-threonine: step 2/4. With respect to regulation, dependent on PFL-activase. Functionally, catalyzes the cleavage of 2-ketobutyrate to propionyl-CoA and formate. It can also use pyruvate as substrate. The sequence is that of PFL-like enzyme TdcE (tdcE) from Escherichia coli (strain K12).